Consider the following 274-residue polypeptide: 2,3,4,5-tetrahydropyridine-2,6-dicarboxylate N-succinyltransferase (274 aa).

Residues Arg-107 and Asp-144 each contribute to the substrate site.

Belongs to the transferase hexapeptide repeat family. In terms of assembly, homotrimer.

It localises to the cytoplasm. The catalysed reaction is (S)-2,3,4,5-tetrahydrodipicolinate + succinyl-CoA + H2O = (S)-2-succinylamino-6-oxoheptanedioate + CoA. Its pathway is amino-acid biosynthesis; L-lysine biosynthesis via DAP pathway; LL-2,6-diaminopimelate from (S)-tetrahydrodipicolinate (succinylase route): step 1/3. In Cereibacter sphaeroides (strain ATCC 17023 / DSM 158 / JCM 6121 / CCUG 31486 / LMG 2827 / NBRC 12203 / NCIMB 8253 / ATH 2.4.1.) (Rhodobacter sphaeroides), this protein is 2,3,4,5-tetrahydropyridine-2,6-dicarboxylate N-succinyltransferase.